A 481-amino-acid chain; its full sequence is Aspartyl/glutamyl-tRNA(Asn/Gln) amidotransferase subunit B (481 aa).

Belongs to the GatB/GatE family. GatB subfamily. As to quaternary structure, heterotrimer of A, B and C subunits.

It carries out the reaction L-glutamyl-tRNA(Gln) + L-glutamine + ATP + H2O = L-glutaminyl-tRNA(Gln) + L-glutamate + ADP + phosphate + H(+). The enzyme catalyses L-aspartyl-tRNA(Asn) + L-glutamine + ATP + H2O = L-asparaginyl-tRNA(Asn) + L-glutamate + ADP + phosphate + 2 H(+). Its function is as follows. Allows the formation of correctly charged Asn-tRNA(Asn) or Gln-tRNA(Gln) through the transamidation of misacylated Asp-tRNA(Asn) or Glu-tRNA(Gln) in organisms which lack either or both of asparaginyl-tRNA or glutaminyl-tRNA synthetases. The reaction takes place in the presence of glutamine and ATP through an activated phospho-Asp-tRNA(Asn) or phospho-Glu-tRNA(Gln). The sequence is that of Aspartyl/glutamyl-tRNA(Asn/Gln) amidotransferase subunit B from Marinomonas sp. (strain MWYL1).